Here is a 657-residue protein sequence, read N- to C-terminus: Regulator of MON1-CCZ1 complex (657 aa).

The region spanning 471–637 (KKEMPHKFVI…NFTPGEHCEE (167 aa)) is the Mic1 domain.

Belongs to the RMC1 family. In terms of assembly, found in a complex with RMC1, CCZ1 MON1A and MON1B.

It localises to the lysosome membrane. The protein localises to the late endosome membrane. Component of the CCZ1-MON1 RAB7A guanine exchange factor (GEF). Acts as a positive regulator of CCZ1-MON1A/B function necessary for endosomal/autophagic flux and efficient RAB7A localization. The protein is Regulator of MON1-CCZ1 complex of Homo sapiens (Human).